Reading from the N-terminus, the 95-residue chain is Large ribosomal subunit protein uL23 (95 aa).

Belongs to the universal ribosomal protein uL23 family. As to quaternary structure, part of the 50S ribosomal subunit. Contacts protein L29, and trigger factor when it is bound to the ribosome.

One of the early assembly proteins it binds 23S rRNA. One of the proteins that surrounds the polypeptide exit tunnel on the outside of the ribosome. Forms the main docking site for trigger factor binding to the ribosome. This Levilactobacillus brevis (strain ATCC 367 / BCRC 12310 / CIP 105137 / JCM 1170 / LMG 11437 / NCIMB 947 / NCTC 947) (Lactobacillus brevis) protein is Large ribosomal subunit protein uL23.